The primary structure comprises 254 residues: Bacteriorhodopsin-I (254 aa).

Residues 1-6 (MSQLAL) constitute a propeptide that is removed on maturation. Gln-7 is subject to Pyrrolidone carboxylic acid. 7 helical membrane-spanning segments follow: residues 16-36 (EGIW…YFIA), 51-71 (VITI…FFGF), 91-111 (YADW…LAGA), 116-136 (IGAL…ATLT), 144-164 (AFWT…VAVF), 185-205 (IILV…EGLA), and 212-232 (ETLL…FILL). Lys-224 carries the N6-(retinylidene)lysine modification.

It belongs to the archaeal/bacterial/fungal opsin family. The covalent binding of retinal to the apoprotein, bacterioopsin, generates bacteriorhodopsin.

The protein localises to the cell membrane. In terms of biological role, light-driven proton pump. This is Bacteriorhodopsin-I (bop1) from Haloquadratum walsbyi (strain DSM 16854 / JCM 12705 / C23).